The sequence spans 105 residues: Small ribosomal subunit protein uS14m (105 aa).

The protein belongs to the universal ribosomal protein uS14 family. Component of the mitochondrial small ribosomal subunit (mt-SSU). Mature yeast 74S mitochondrial ribosomes consist of a small (37S) and a large (54S) subunit. The 37S small subunit contains a 15S ribosomal RNA (15S mt-rRNA) and at least 32 different proteins. The 54S large subunit contains a 21S rRNA (21S mt-rRNA) and at least 45 different proteins.

It localises to the mitochondrion. Its function is as follows. Component of the mitochondrial ribosome (mitoribosome), a dedicated translation machinery responsible for the synthesis of mitochondrial genome-encoded proteins, including at least some of the essential transmembrane subunits of the mitochondrial respiratory chain. The mitoribosomes are attached to the mitochondrial inner membrane and translation products are cotranslationally integrated into the membrane. This is Small ribosomal subunit protein uS14m (mrp2) from Schizosaccharomyces pombe (strain 972 / ATCC 24843) (Fission yeast).